Reading from the N-terminus, the 630-residue chain is tRNA uridine 5-carboxymethylaminomethyl modification enzyme MnmG (630 aa).

FAD contacts are provided by residues 14–19 (GAGHAG), V126, and S181. 273-287 (GPRYCPSIEDKVVRF) is a binding site for NAD(+). FAD is bound at residue Q370.

The protein belongs to the MnmG family. Homodimer. Heterotetramer of two MnmE and two MnmG subunits. FAD is required as a cofactor.

The protein resides in the cytoplasm. Functionally, NAD-binding protein involved in the addition of a carboxymethylaminomethyl (cmnm) group at the wobble position (U34) of certain tRNAs, forming tRNA-cmnm(5)s(2)U34. This Alkaliphilus metalliredigens (strain QYMF) protein is tRNA uridine 5-carboxymethylaminomethyl modification enzyme MnmG.